A 1037-amino-acid polypeptide reads, in one-letter code: Importin-8 (1037 aa).

An Importin N-terminal domain is found at 22-102; it reads AENELNQSYK…RDNIVEGIIR (81 aa). A compositionally biased stretch (basic and acidic residues) spans 886–895; that stretch reads DRSKAEKADM. The segment at 886 to 934 is disordered; the sequence is DRSKAEKADMEENEEISSDEEETNVTAQAMQSNNGRGEDEEEEDDDWDE. Residues 896-908 show a composition bias toward acidic residues; the sequence is EENEEISSDEEET. Residues Ser-902 and Ser-903 each carry the phosphoserine modification. Polar residues predominate over residues 909-920; sequence NVTAQAMQSNNG. Acidic residues predominate over residues 923 to 934; it reads EDEEEEDDDWDE.

The protein belongs to the importin beta family. As to quaternary structure, forms a heterodimer with KPNB1. Interacts with SRP19. Interacts with RPL23A. Binds directly to nuclear pore complexes. Interacts with LRPPRC; the interaction occurs when LRPPRC is in its RNA-free form and promotes import of LRPPRC to the nucleus to allow for EIF4E-mediated export of mRNAS from the nucleus to the cytoplasm.

It is found in the cytoplasm. It localises to the nucleus. Involved in nuclear protein import, either by acting as autonomous nuclear transport receptor or as an adapter-like protein in association with the importin-beta subunit KPNB1. Acting autonomously, may serve as receptor for nuclear localization signals (NLS) and promote translocation of import substrates through the nuclear pore complex (NPC) by an energy requiring, Ran-dependent mechanism. At the nucleoplasmic side of the NPC, Ran binds to importin, the importin/substrate complex dissociates and importin is re-exported from the nucleus to the cytoplasm where GTP hydrolysis releases Ran. The directionality of nuclear import is thought to be conferred by an asymmetric distribution of the GTP- and GDP-bound forms of Ran between the cytoplasm and nucleus. In vitro mediates the nuclear import of the signal recognition particle protein SRP19. May also be involved in cytoplasm-to-nucleus shuttling of a broad spectrum of other cargos, including Argonaute-microRNAs complexes, the JUN protein, RELA/NF-kappa-B p65 subunit, the translation initiation factor EIF4E and a set of receptor-activated mothers against decapentaplegic homolog (SMAD) transcription factors that play a critical role downstream of the large family of transforming growth factor beta and bone morphogenetic protein (BMP) cytokines. The protein is Importin-8 (IPO8) of Homo sapiens (Human).